The primary structure comprises 126 residues: MARVSGVDIPREKRVEVALTYVFGIGRTRSKEILASTGVNPNTRVRDLAEEDLVKIREHVDANLRTEGDLRREVQANIRRKVEIGCYQGIRHRRGLPVHGQRTSTNARTRKGPRRAIAGKKKPGKK.

Positions 94–126 are disordered; it reads RGLPVHGQRTSTNARTRKGPRRAIAGKKKPGKK. Residues 108-126 are compositionally biased toward basic residues; the sequence is RTRKGPRRAIAGKKKPGKK.

This sequence belongs to the universal ribosomal protein uS13 family. As to quaternary structure, part of the 30S ribosomal subunit. Forms a loose heterodimer with protein S19. Forms two bridges to the 50S subunit in the 70S ribosome.

Located at the top of the head of the 30S subunit, it contacts several helices of the 16S rRNA. In the 70S ribosome it contacts the 23S rRNA (bridge B1a) and protein L5 of the 50S subunit (bridge B1b), connecting the 2 subunits; these bridges are implicated in subunit movement. Contacts the tRNAs in the A and P-sites. In Streptomyces griseus subsp. griseus (strain JCM 4626 / CBS 651.72 / NBRC 13350 / KCC S-0626 / ISP 5235), this protein is Small ribosomal subunit protein uS13.